The primary structure comprises 98 residues: UPF0473 protein LSL_1108 (98 aa).

Belongs to the UPF0473 family.

The chain is UPF0473 protein LSL_1108 from Ligilactobacillus salivarius (strain UCC118) (Lactobacillus salivarius).